Reading from the N-terminus, the 266-residue chain is Carboxy-S-adenosyl-L-methionine synthase (266 aa).

Residues 1–24 are disordered; it reads MPKRETQSLHDTQQQPGPTAPQRD. Residues Y58, 83 to 85, 108 to 109, 136 to 137, N151, and R218 contribute to the S-adenosyl-L-methionine site; these read GCS, DN, and DI.

It belongs to the class I-like SAM-binding methyltransferase superfamily. Cx-SAM synthase family. Homodimer.

It carries out the reaction prephenate + S-adenosyl-L-methionine = carboxy-S-adenosyl-L-methionine + 3-phenylpyruvate + H2O. In terms of biological role, catalyzes the conversion of S-adenosyl-L-methionine (SAM) to carboxy-S-adenosyl-L-methionine (Cx-SAM). The protein is Carboxy-S-adenosyl-L-methionine synthase of Yersinia enterocolitica serotype O:8 / biotype 1B (strain NCTC 13174 / 8081).